A 179-amino-acid chain; its full sequence is Putative FBD-associated F-box protein At3g12840 (179 aa).

An F-box domain is found at 14–60; the sequence is AARINDLPDDLLATVLSFVPTKDAVATSILSKRWRPIWKRAVNLESD. The region spanning 101–152 is the FBD domain; it reads KWKQPDFVPLSLYRSLEAFEWIGFKGREKTEKKAAFHILRNACNLKTMAITT.

This chain is Putative FBD-associated F-box protein At3g12840, found in Arabidopsis thaliana (Mouse-ear cress).